A 571-amino-acid chain; its full sequence is Adenine deaminase (571 aa).

This sequence belongs to the metallo-dependent hydrolases superfamily. Adenine deaminase family. It depends on Mn(2+) as a cofactor.

It catalyses the reaction adenine + H2O + H(+) = hypoxanthine + NH4(+). This Dehalococcoides mccartyi (strain ATCC BAA-2100 / JCM 16839 / KCTC 5957 / BAV1) protein is Adenine deaminase.